A 636-amino-acid polypeptide reads, in one-letter code: 1-deoxy-D-xylulose-5-phosphate synthase (636 aa).

Thiamine diphosphate-binding positions include H75 and 116 to 118 (AHS). Position 147 (D147) interacts with Mg(2+). Thiamine diphosphate contacts are provided by residues 148–149 (GA), N177, Y288, and E370. N177 is a binding site for Mg(2+).

The protein belongs to the transketolase family. DXPS subfamily. As to quaternary structure, homodimer. The cofactor is Mg(2+). It depends on thiamine diphosphate as a cofactor.

It catalyses the reaction D-glyceraldehyde 3-phosphate + pyruvate + H(+) = 1-deoxy-D-xylulose 5-phosphate + CO2. The protein operates within metabolic intermediate biosynthesis; 1-deoxy-D-xylulose 5-phosphate biosynthesis; 1-deoxy-D-xylulose 5-phosphate from D-glyceraldehyde 3-phosphate and pyruvate: step 1/1. In terms of biological role, catalyzes the acyloin condensation reaction between C atoms 2 and 3 of pyruvate and glyceraldehyde 3-phosphate to yield 1-deoxy-D-xylulose-5-phosphate (DXP). The chain is 1-deoxy-D-xylulose-5-phosphate synthase from Ralstonia pickettii (strain 12J).